Reading from the N-terminus, the 256-residue chain is Rhamnolipids biosynthesis 3-oxoacyl-[acyl-carrier-protein] reductase (256 aa).

14–38 (VTGGSRGIGQMIAQGLLEAGARVFI) contacts NADP(+). Residue S148 coordinates substrate. Y162 serves as the catalytic Proton acceptor.

It belongs to the short-chain dehydrogenases/reductases (SDR) family.

The enzyme catalyses a (3R)-hydroxyacyl-[ACP] + NADP(+) = a 3-oxoacyl-[ACP] + NADPH + H(+). It functions in the pathway lipid metabolism; rhamnolipid biosynthesis. Its function is as follows. Required for the synthesis of the beta-hydroxy acid moiety of rhamnolipids. The polypeptide is Rhamnolipids biosynthesis 3-oxoacyl-[acyl-carrier-protein] reductase (rhlG) (Pseudomonas aeruginosa (strain ATCC 15692 / DSM 22644 / CIP 104116 / JCM 14847 / LMG 12228 / 1C / PRS 101 / PAO1)).